The following is a 139-amino-acid chain: FLYWCH family member 2 (139 aa).

Disordered stretches follow at residues 1–36 (MPQP…PRKP) and 86–139 (EAQR…STSP). The span at 98–107 (PEQKRSKQNL) shows a compositional bias: basic and acidic residues. The segment covering 120–130 (VSSSSSEETTV) has biased composition (low complexity).

This Mus musculus (Mouse) protein is FLYWCH family member 2 (Flywch2).